The sequence spans 797 residues: N-acetylneuraminate (7)9-O-acetyltransferase (797 aa).

Residues 1 to 18 lie on the Cytoplasmic side of the membrane; sequence MAALAYNLGKREINHYFS. The chain crosses the membrane as a helical span at residues 19 to 39; sequence VRSAKVLALVAVLLLAACHLA. Residues 40–313 lie on the Lumenal side of the membrane; sequence SRRYRGNDSC…QPRPPVTLIQ (274 aa). A glycan (N-linked (GlcNAc...) asparagine) is linked at asparagine 46. The Acyl-ester intermediate role is filled by serine 94. N-linked (GlcNAc...) asparagine glycans are attached at residues asparagine 175 and asparagine 187. Residues aspartate 270 and histidine 273 contribute to the active site. A helical transmembrane segment spans residues 314–334; sequence KLAACFFTLSIIGYLIFYIIH. Residues 335–363 lie on the Cytoplasmic side of the membrane; that stretch reads RNAHRKNKPCTDLESGEEKKNIINTPVSS. The helical transmembrane segment at 364 to 384 threads the bilayer; the sequence is LEILLQSFCKLGLIMAYFYMC. Residues 385 to 395 lie on the Lumenal side of the membrane; sequence DRANLFMKENK. Residues 396-416 traverse the membrane as a helical segment; that stretch reads FYTHSSFFIPIIYILVLGVFY. The Cytoplasmic segment spans residues 417 to 439; sequence NENTKETKVLNREQTDEWKGWMQ. The chain crosses the membrane as a helical span at residues 440–460; sequence LVILIYHISGASTFLPVYMHI. Position 461 (arginine 461) is a topological domain, lumenal. Residues 462–482 traverse the membrane as a helical segment; the sequence is VLVAAYLFQTGYGHFSYFWIK. The Cytoplasmic portion of the chain corresponds to 483 to 486; that stretch reads GDFG. The helical transmembrane segment at 487–507 threads the bilayer; the sequence is IYRVCQVLFRLNFLVVVLCIV. Residues 508-513 lie on the Lumenal side of the membrane; it reads MDRPYQ. The helical transmembrane segment at 514–534 threads the bilayer; the sequence is FYYFVPLVTVWFMVIYVTLAL. The Cytoplasmic portion of the chain corresponds to 535–547; the sequence is WPQIIQKKANGNC. Residues 548 to 568 traverse the membrane as a helical segment; it reads FWHFGLLLKLGFLLLFICFLA. The Lumenal segment spans residues 569 to 605; sequence YSQGAFEKIFSLWPLSKCFELKGNVYEWWFRWRLDRY. A helical transmembrane segment spans residues 606–626; that stretch reads VVFHGMLFAFIYLALQKRQIL. The Cytoplasmic segment spans residues 627–638; sequence SEGKGEPLFSNK. A helical transmembrane segment spans residues 639–659; it reads ISNFLLFISVVSFLTYSIWAS. At 660–671 the chain is on the lumenal side; sequence SCKNKAECNELH. The chain crosses the membrane as a helical span at residues 672 to 692; it reads PSVSVVQILAFILIRNIPGYA. Over 693 to 698 the chain is Cytoplasmic; sequence RSVYSS. Residues 699–719 traverse the membrane as a helical segment; that stretch reads FFAWFGKISLELFICQYHIWL. At 720–725 the chain is on the lumenal side; it reads AADTRG. A helical transmembrane segment spans residues 726 to 746; that stretch reads ILVLIPGNPMLNIIVSTFIFV. Over 747–770 the chain is Cytoplasmic; it reads CVAHEISQITNDLAQIIIPKDNSS. A helical transmembrane segment spans residues 771 to 791; that stretch reads LLKRLACIAAFFCGLLILSSI. Residues 792–797 lie on the Lumenal side of the membrane; that stretch reads QDKSKH.

The protein belongs to the PC-esterase family. CASD1 subfamily. N-glycosylated. In terms of tissue distribution, highly expressed in peripheral B lymphocytes.

It is found in the golgi apparatus membrane. The enzyme catalyses CMP-N-acetyl-beta-neuraminate + acetyl-CoA = CMP-N-acetyl-9-O-acetyl-beta-neuraminate + CoA. It catalyses the reaction a ganglioside GD3 (d18:1(4E)) + acetyl-CoA = a ganglioside Ac-O-7-GD3(d18:1(4E)) + CoA. It carries out the reaction CMP-N-acetyl-beta-neuraminate + acetyl-CoA = CMP-N-acetyl-7-O-acetyl-beta-neuraminate + CoA. Its function is as follows. Key enzyme in the biosynthesis of O-acetylated (O-Ac) sialoglycans such as gangliosides O-AcGD3 and O-AcGD2, which affect various processes such as cell-cell interactions, host-pathogen recognition. Catalyzes the transfer of an acetyl group from a donor, the acetyl-coenzyme-A molecule (acetyl-CoA), to the C7/8/9 OH-position of a sialic acid residue. The primary site of O-acetyl group transfer on sialic acid seems to depend on cell type and can be C7, from which the O-acetyl group could subsequently migrate to the C8 and then to the C9 position, or at C9 with possibility of migrating to the C8 and then to the C7 position. Together with ST8SIA1 (GD3 synthase) it increases the levels of ganglioside Ac-O-7-GD3. Can transfer the acetyl group from acetyl-CoA to free sialate (N-acetylneuraminate, Neu5Ac) in vitro, but has preferred substrate specificity for CMP-activated sialate (CMP-Neu5Ac), resulting in the formation of 9-O-acetylated CMP-Neu5Ac (CMP-Neu5,9Ac2). CMP-Neu5,9Ac2 may be used by sialyltransferases as a sialate donor for glycoconjugate acceptors such as ganglioside GD3. O-acetylation at position C9 of ganglioside GD3 can counteract the pro-apoptotic effects of the ganglioside GD3 in tumor cells. The protein is N-acetylneuraminate (7)9-O-acetyltransferase of Homo sapiens (Human).